The sequence spans 282 residues: HTH-type transcriptional activator RhaR (282 aa).

Residues 179-277 (DKLITALANS…GMTPSQWRHL (99 aa)) form the HTH araC/xylS-type domain. 2 DNA-binding regions (H-T-H motif) span residues 196-217 (DAFC…RAQT) and 244-267 (ISEI…TRET).

Binds DNA as a dimer.

It is found in the cytoplasm. Its function is as follows. Activates expression of the rhaSR operon in response to L-rhamnose. The sequence is that of HTH-type transcriptional activator RhaR from Salmonella schwarzengrund (strain CVM19633).